The sequence spans 483 residues: Wax ester synthase/diacylglycerol acyltransferase 10 (483 aa).

Residues methionine 1 to arginine 203 are Cytoplasmic-facing. The active-site Proton acceptor is histidine 143. The chain crosses the membrane as a helical span at residues leucine 204–phenylalanine 222. The Lumenal portion of the chain corresponds to lysine 223–aspartate 483. N-linked (GlcNAc...) asparagine glycosylation is found at asparagine 394 and asparagine 399.

It in the N-terminal section; belongs to the long-chain O-acyltransferase family. As to expression, mostly expressed in roots.

The protein resides in the cell membrane. The protein localises to the endoplasmic reticulum membrane. The enzyme catalyses an acyl-CoA + a 1,2-diacyl-sn-glycerol = a triacyl-sn-glycerol + CoA. It catalyses the reaction a long chain fatty alcohol + a fatty acyl-CoA = a wax ester + CoA. The protein operates within glycerolipid metabolism; triacylglycerol biosynthesis. It functions in the pathway lipid metabolism. Its function is as follows. Bifunctional wax ester synthase/diacylglycerol acyltransferase. Involved in cuticular wax biosynthesis. This chain is Wax ester synthase/diacylglycerol acyltransferase 10, found in Arabidopsis thaliana (Mouse-ear cress).